Here is a 66-residue protein sequence, read N- to C-terminus: Large ribosomal subunit protein uL29 (66 aa).

The protein belongs to the universal ribosomal protein uL29 family.

The protein is Large ribosomal subunit protein uL29 of Syntrophobacter fumaroxidans (strain DSM 10017 / MPOB).